The following is a 429-amino-acid chain: Glucose-6-phosphate isomerase (429 aa).

Residue Glu282 is the Proton donor of the active site. Catalysis depends on residues His303 and Lys418.

It belongs to the GPI family.

It localises to the cytoplasm. It carries out the reaction alpha-D-glucose 6-phosphate = beta-D-fructose 6-phosphate. The protein operates within carbohydrate biosynthesis; gluconeogenesis. Its pathway is carbohydrate degradation; glycolysis; D-glyceraldehyde 3-phosphate and glycerone phosphate from D-glucose: step 2/4. Functionally, catalyzes the reversible isomerization of glucose-6-phosphate to fructose-6-phosphate. The polypeptide is Glucose-6-phosphate isomerase (Mesomycoplasma hyopneumoniae (strain J / ATCC 25934 / NCTC 10110) (Mycoplasma hyopneumoniae)).